Here is a 470-residue protein sequence, read N- to C-terminus: tRNA modification GTPase MnmE (470 aa).

3 residues coordinate (6S)-5-formyl-5,6,7,8-tetrahydrofolate: K27, E90, and R129. Residues 231–391 enclose the TrmE-type G domain; the sequence is GVSLVLAGKP…LRDFLNQRFL (161 aa). GTP is bound by residues 241 to 246, 260 to 266, and 285 to 288; these read NVGKSS, TPFPGTT, and DTAG. 2 residues coordinate Mg(2+): S245 and T266. Residue K470 coordinates (6S)-5-formyl-5,6,7,8-tetrahydrofolate.

Belongs to the TRAFAC class TrmE-Era-EngA-EngB-Septin-like GTPase superfamily. TrmE GTPase family. As to quaternary structure, homodimer. Heterotetramer of two MnmE and two MnmG subunits. The cofactor is K(+).

It is found in the cytoplasm. Its function is as follows. Exhibits a very high intrinsic GTPase hydrolysis rate. Involved in the addition of a carboxymethylaminomethyl (cmnm) group at the wobble position (U34) of certain tRNAs, forming tRNA-cmnm(5)s(2)U34. The polypeptide is tRNA modification GTPase MnmE (Syntrophobacter fumaroxidans (strain DSM 10017 / MPOB)).